The following is a 417-amino-acid chain: Laccase-like protein claX (417 aa).

Belongs to the multicopper oxidase family.

Laccase-like protein; part of the gene cluster that mediates the biosynthesis of clavilactone A, a meroterpenoid that features a unique benzo-fused ten-membered carbocyclic ring unit with an alpha,beta-epoxy-gamma-lactone moiety, forming an intriguing 10/5/3 tricyclic nested skeleton. ClaR, ClaS and ClaT are sufficient to produce clavilactone A and the function of claX, if any, has still to be identified. The biosynthesis begins with the prenyltransferase claS that transfers geranyl pyrophosphate (GPP) to hydroquinone to produces geranylhydroquinon. The cytochrome P450 monooxygenase claR then catalyzes the diradical coupling reaction between the intramolecular hydroquinone and allyl moieties to form the benzo-fused ten-membered carbocyclic ring unit of wigantol. Finally the cytochrome P450 monooxygenase claT exquisitely and stereoselectively assembles the alpha,beta-epoxy-gamma-lactone moiety, producing clavilactone A via arnebinol A. This is Laccase-like protein claX from Ampulloclitocybe clavipes (Club foot).